Here is a 553-residue protein sequence, read N- to C-terminus: MGSRSSTRIPVPLMLTVRVMLALSCVCPTSALDGRPLAAAGIVVTGDKAVNIYTSSQTGSIIIKLLPNMPKDKEACAKAPLEAYNRTLTTLLTPLGDSIRRIQESVTTSGGGKQGRLIGAIIGGVALGVATAAQITAASALIQANQNAANILLLKESIAATNEAVHEVTNGLSQLAVAVGKMQQFVNDQFNKTAQELDCIKITQQVGVELNLYLTELTTVFGPQITSPALTQLTIQALYNLAGGNMDYLLTKLGVGNNQLSSLISSGLITGNPILYDSQTQLLGIQVTLPSVGNLNNMRATYLETLSVSTTKGFASALVPKVVTQVGSVIEELDTSYCIETDLDLFFSRIVTFPMSPGIYSCLSGNTSACMYSKTEGALTTPYMTLKGSVIANCKMTTCRCADPPGIISQNYGEAVSLIDRQSCNMFSLDGITLRLSGEFDATYQKNISIQDSQVIVTGNLDISTELGNVNNSISNALDKLEESNSKLDKVNVKLTSTSALITYIVLTVISLVCGILSLVLACYLMYKQKAQQKTLLWLGNNTLDQMRATTKM.

The signal sequence occupies residues 1–31 (MGSRSSTRIPVPLMLTVRVMLALSCVCPTSA). Over 32–500 (LDGRPLAAAG…VNVKLTSTSA (469 aa)) the chain is Extracellular. Cystine bridges form between cysteine 76–cysteine 199, cysteine 362–cysteine 370, cysteine 394–cysteine 399, and cysteine 401–cysteine 424. Residue asparagine 85 is glycosylated (N-linked (GlcNAc...) asparagine; by host). A fusion peptide region spans residues 117 to 141 (LIGAIIGGVALGVATAAQITAASAL). The stretch at 142 to 170 (IQANQNAANILLLKESIAATNEAVHEVTN) forms a coiled coil. N-linked (GlcNAc...) asparagine; by host glycosylation is found at asparagine 191 and asparagine 366. N-linked (GlcNAc...) asparagine; by host glycosylation is found at asparagine 447 and asparagine 471. Positions 466–491 (ELGNVNNSISNALDKLEESNSKLDKV) form a coiled coil. The chain crosses the membrane as a helical span at residues 501-521 (LITYIVLTVISLVCGILSLVL). At 522-553 (ACYLMYKQKAQQKTLLWLGNNTLDQMRATTKM) the chain is on the cytoplasmic side. Cysteine 523 carries the S-palmitoyl cysteine; by host lipid modification.

This sequence belongs to the paramyxoviruses fusion glycoprotein family. Homotrimer of disulfide-linked F1-F2. Post-translationally, the inactive precursor F0 is glycosylated and proteolytically cleaved into F1 and F2 to be functionally active. The cleavage is mediated by cellular proteases during the transport and maturation of the polypeptide.

The protein resides in the virion membrane. Its subcellular location is the host cell membrane. Class I viral fusion protein. Under the current model, the protein has at least 3 conformational states: pre-fusion native state, pre-hairpin intermediate state, and post-fusion hairpin state. During viral and plasma cell membrane fusion, the heptad repeat (HR) regions assume a trimer-of-hairpins structure, positioning the fusion peptide in close proximity to the C-terminal region of the ectodomain. The formation of this structure appears to drive apposition and subsequent fusion of viral and plasma cell membranes. Directs fusion of viral and cellular membranes leading to delivery of the nucleocapsid into the cytoplasm. This fusion is pH independent and occurs directly at the outer cell membrane. The trimer of F1-F2 (F protein) probably interacts with HN at the virion surface. Upon HN binding to its cellular receptor, the hydrophobic fusion peptide is unmasked and interacts with the cellular membrane, inducing the fusion between cell and virion membranes. Later in infection, F proteins expressed at the plasma membrane of infected cells could mediate fusion with adjacent cells to form syncytia, a cytopathic effect that could lead to tissue necrosis. The polypeptide is Fusion glycoprotein F0 (F) (Newcastle disease virus (strain Queensland/66) (NDV)).